The sequence spans 465 residues: Tetratricopeptide repeat protein 38 (465 aa).

3 TPR repeats span residues 104–137 (REQLHVSAVEMFAKGNFPRACDLWEQILRDHPTD), 176–209 (SYVKGIYSFGLMETNFYDQAQKLAKEALSIEPTD), and 248–281 (CHNYWHWALYLIEKGDYEAALTIYDSHILPSLQA).

It belongs to the TTC38 family.

The chain is Tetratricopeptide repeat protein 38 (Ttc38) from Mus musculus (Mouse).